A 658-amino-acid chain; its full sequence is PTS system 2-O-alpha-mannosyl-D-glycerate-specific EIIABC component (658 aa).

Over 1–313 (MVLFYRAHWR…TELKQALLSG (313 aa)) the chain is Periplasmic. The region spanning 25 to 171 (TLTHRDALCL…DELLSALDDK (147 aa)) is the PTS EIIA type-2 domain. H87 (tele-phosphohistidine intermediate; for EIIA activity) is an active-site residue. At H87 the chain carries Phosphohistidine; by HPr. Residues 186–282 (IVCVTACPAG…AEALIQQALT (97 aa)) form the PTS EIIB type-2 domain. The active-site Phosphocysteine intermediate; for EIIB activity is C192. The residue at position 192 (C192) is a Phosphocysteine; by EIIA. The region spanning 306–641 (LKQALLSGIS…AISTAILLMW (336 aa)) is the PTS EIIC type-2 domain. The chain crosses the membrane as a helical span at residues 314 to 334 (ISFAVPLIVAGGTVLAVAVLL). Residues 335 to 358 (SQIFGLQDLFNEENSWLWMYRKLG) are Cytoplasmic-facing. A helical transmembrane segment spans residues 359–379 (GGLLGILMVPVLAAYTAYSLA). Residues 380-389 (DKPALAPGFA) lie on the Periplasmic side of the membrane. The helical transmembrane segment at 390–410 (AGLAANMIGSGFLGAVVGGLI) threads the bilayer. Over 411–433 (AGYLMRWVKNHLRLSSKFNGFLT) the chain is Cytoplasmic. The helical transmembrane segment at 434–454 (FYLYPVLGTLGAGSLMLFVVG) threads the bilayer. The Periplasmic portion of the chain corresponds to 455 to 474 (EPVAWINNSLTAWLNGLSGS). A helical membrane pass occupies residues 475–495 (NALLLGAILGFMCSFDLGGPV). The Cytoplasmic segment spans residues 496–500 (NKAAY). The helical transmembrane segment at 501–521 (AFCLGAMANGVYGPYAIFASV) threads the bilayer. The Periplasmic portion of the chain corresponds to 522-551 (KMVSAFTVTASTMLAPRLFKEFEIETGKST). A helical membrane pass occupies residues 552 to 572 (WLLGLAGITEGAIPMAIEDPL). Position 573 (R573) is a topological domain, cytoplasmic. The helical transmembrane segment at 574 to 594 (VIGSFVLGSMVTGAIVGAMNI) threads the bilayer. Residues 595–620 (GLSTPGAGIFSLFLLHDNGAGGVMAA) lie on the Periplasmic side of the membrane. Residues 621-641 (IGWFGAALVGAAISTAILLMW) form a helical membrane-spanning segment. Residues 642-658 (RRHAVKHGNYLTDGVMP) lie on the Cytoplasmic side of the membrane.

The protein localises to the cell inner membrane. The catalysed reaction is (2R)-2-O-(alpha-D-mannosyl)-glycerate(out) + N(pros)-phospho-L-histidyl-[protein] = (2R)-2-O-(6-phospho-alpha-D-mannosyl)-glycerate(in) + L-histidyl-[protein]. In terms of biological role, the phosphoenolpyruvate-dependent sugar phosphotransferase system (sugar PTS), a major carbohydrate active transport system, catalyzes the phosphorylation of incoming sugar substrates concomitantly with their translocation across the cell membrane. This system is involved in mannosyl-D-glycerate transport. Also involved in thermoinduction of ompC. The chain is PTS system 2-O-alpha-mannosyl-D-glycerate-specific EIIABC component from Escherichia coli (strain K12).